The primary structure comprises 62 residues: Temporin-1PLa (62 aa).

The signal sequence occupies residues 1–22 (MFTSKKSLLLLFFLGTINLSLC). Positions 23–45 (EEERDADEEERRDDPDEMNVEVE) are excised as a propeptide. I60 carries the post-translational modification Isoleucine amide.

In terms of tissue distribution, expressed by the skin glands.

The protein localises to the secreted. Antimicrobial activity against the Gram-positive bacterium S.aureus. The sequence is that of Temporin-1PLa from Lithobates palustris (Pickerel frog).